Here is a 424-residue protein sequence, read N- to C-terminus: Enolase (424 aa).

Position 162 (Q162) interacts with (2R)-2-phosphoglycerate. E204 functions as the Proton donor in the catalytic mechanism. Residues D241, E284, and D311 each coordinate Mg(2+). (2R)-2-phosphoglycerate is bound by residues K336, R365, S366, and K387. Catalysis depends on K336, which acts as the Proton acceptor.

Belongs to the enolase family. It depends on Mg(2+) as a cofactor.

The protein resides in the cytoplasm. It is found in the secreted. The protein localises to the cell surface. It carries out the reaction (2R)-2-phosphoglycerate = phosphoenolpyruvate + H2O. It participates in carbohydrate degradation; glycolysis; pyruvate from D-glyceraldehyde 3-phosphate: step 4/5. Catalyzes the reversible conversion of 2-phosphoglycerate (2-PG) into phosphoenolpyruvate (PEP). It is essential for the degradation of carbohydrates via glycolysis. This is Enolase from Sinorhizobium medicae (strain WSM419) (Ensifer medicae).